A 74-amino-acid chain; its full sequence is DNA-directed RNA polymerase subunit omega (74 aa).

Belongs to the RNA polymerase subunit omega family. In terms of assembly, the RNAP catalytic core consists of 2 alpha, 1 beta, 1 beta' and 1 omega subunit. When a sigma factor is associated with the core the holoenzyme is formed, which can initiate transcription.

The catalysed reaction is RNA(n) + a ribonucleoside 5'-triphosphate = RNA(n+1) + diphosphate. In terms of biological role, promotes RNA polymerase assembly. Latches the N- and C-terminal regions of the beta' subunit thereby facilitating its interaction with the beta and alpha subunits. This is DNA-directed RNA polymerase subunit omega from Lactobacillus acidophilus (strain ATCC 700396 / NCK56 / N2 / NCFM).